The chain runs to 64 residues: UPF0337 protein SAB0772 (64 aa).

Positions 1–40 are disordered; it reads MADESKFEQAKGNVKETIGNVTDNKNLENEGKEDKASGKA. Residues 25–40 show a composition bias toward basic and acidic residues; the sequence is KNLENEGKEDKASGKA.

Belongs to the UPF0337 (CsbD) family.

The chain is UPF0337 protein SAB0772 from Staphylococcus aureus (strain bovine RF122 / ET3-1).